Here is a 906-residue protein sequence, read N- to C-terminus: Protein translocase subunit SecA (906 aa).

Residues glutamine 87, glycine 105 to threonine 109, and aspartate 507 contribute to the ATP site. 4 residues coordinate Zn(2+): cysteine 890, cysteine 892, cysteine 901, and histidine 902.

The protein belongs to the SecA family. Monomer and homodimer. Part of the essential Sec protein translocation apparatus which comprises SecA, SecYEG and auxiliary proteins SecDF-YajC and YidC. The cofactor is Zn(2+).

Its subcellular location is the cell inner membrane. The protein resides in the cytoplasm. The enzyme catalyses ATP + H2O + cellular proteinSide 1 = ADP + phosphate + cellular proteinSide 2.. Functionally, part of the Sec protein translocase complex. Interacts with the SecYEG preprotein conducting channel. Has a central role in coupling the hydrolysis of ATP to the transfer of proteins into and across the cell membrane, serving both as a receptor for the preprotein-SecB complex and as an ATP-driven molecular motor driving the stepwise translocation of polypeptide chains across the membrane. The sequence is that of Protein translocase subunit SecA from Thiobacillus denitrificans (strain ATCC 25259 / T1).